Here is a 388-residue protein sequence, read N- to C-terminus: DNA primase small subunit PriS (388 aa).

Catalysis depends on residues D100, D102, and D288.

Belongs to the eukaryotic-type primase small subunit family. In terms of assembly, heterodimer of a small subunit (PriS) and a large subunit (PriL). The cofactor is Mg(2+). It depends on Mn(2+) as a cofactor.

In terms of biological role, catalytic subunit of DNA primase, an RNA polymerase that catalyzes the synthesis of short RNA molecules used as primers for DNA polymerase during DNA replication. The small subunit contains the primase catalytic core and has DNA synthesis activity on its own. Binding to the large subunit stabilizes and modulates the activity, increasing the rate of DNA synthesis while decreasing the length of the DNA fragments, and conferring RNA synthesis capability. The DNA polymerase activity may enable DNA primase to also catalyze primer extension after primer synthesis. May also play a role in DNA repair. In Methanospirillum hungatei JF-1 (strain ATCC 27890 / DSM 864 / NBRC 100397 / JF-1), this protein is DNA primase small subunit PriS.